The sequence spans 325 residues: Odorant receptor 131-2 (325 aa).

At 1–22 (MNSTSNSSLGNTFISKTLKEKS) the chain is on the extracellular side. Residues Asn-2 and Asn-6 are each glycosylated (N-linked (GlcNAc...) asparagine). The chain crosses the membrane as a helical span at residues 23 to 43 (LTVQVLVGILLYVNGLMIFTF). The Cytoplasmic segment spans residues 44–54 (LKKETFRDTRY). The helical transmembrane segment at 55–75 (ILFAQTLFVDSALMLFADLTL) threads the bilayer. Topologically, residues 76-91 (VGSAYELFIHIISCYI) are extracellular. A disulfide bridge links Cys-89 with Cys-170. The chain crosses the membrane as a helical span at residues 92-112 (FCTVMALLSICSPVTLVAMCL). The Cytoplasmic segment spans residues 113 to 135 (ERYVAICLPLRHASISSPKNTIN). Residues 136–156 (GLLIIWGVSSVIPLFIFIVSF) form a helical membrane-spanning segment. The Extracellular portion of the chain corresponds to 157 to 190 (TYTPPNAMNSYVVCSNDVMFQVKWLAEMRALSQQ). Residues 191–211 (LLFVIMLCIVGSTYIKIMVAA) traverse the membrane as a helical segment. At 212 to 227 (KSASAENKKSTYKGLR) the chain is on the cytoplasmic side. The helical transmembrane segment at 228–248 (TVILHGLQLILGMMQLITPYI) threads the bilayer. Over 249-267 (DILTLKVDIMLFINVKFSN) the chain is Extracellular. Residues 268-285 (FMLFWIFPRCLSPLVYGL) traverse the membrane as a helical segment. The Cytoplasmic segment spans residues 286-325 (RDKKFYNALKYYAFCGIYVCKKHKIKDSKTIRGAVSIAIY).

Belongs to the G-protein coupled receptor 1 family. In terms of assembly, homodimer. Monomer.

It localises to the cell membrane. The protein localises to the cytoplasm. In terms of biological role, probable olfactory receptor. This is Odorant receptor 131-2 from Danio rerio (Zebrafish).